The chain runs to 104 residues: Large ribosomal subunit protein uL24 (104 aa).

The protein belongs to the universal ribosomal protein uL24 family. As to quaternary structure, part of the 50S ribosomal subunit.

Functionally, one of two assembly initiator proteins, it binds directly to the 5'-end of the 23S rRNA, where it nucleates assembly of the 50S subunit. Its function is as follows. One of the proteins that surrounds the polypeptide exit tunnel on the outside of the subunit. This chain is Large ribosomal subunit protein uL24, found in Rhodopseudomonas palustris (strain BisA53).